A 552-amino-acid polypeptide reads, in one-letter code: Putative lipase ATG15 (552 aa).

Residues 1–26 (MLHITEKEQTRGLRQLEKRGKRLLPP) are Cytoplasmic-facing. The chain crosses the membrane as a helical; Signal-anchor for type II membrane protein span at residues 27-49 (LIKFIWFCLISAACVAATTFYWL). Over 50-552 (RLSPVHNIHK…WRFVSHDDKE (503 aa)) the chain is Lumenal. 5 N-linked (GlcNAc...) asparagine glycosylation sites follow: asparagine 63, asparagine 147, asparagine 239, asparagine 307, and asparagine 391. Catalysis depends on serine 409, which acts as the Charge relay system. N-linked (GlcNAc...) asparagine glycosylation is present at asparagine 526.

Belongs to the AB hydrolase superfamily. Lipase family. As to quaternary structure, binds to both phosphatidylinositol (PI) and phosphatidylinositol 3,5-bisphosphate (PIP2).

Its subcellular location is the endosome. It localises to the multivesicular body membrane. It is found in the prevacuolar compartment membrane. The enzyme catalyses a triacylglycerol + H2O = a diacylglycerol + a fatty acid + H(+). Functionally, lipase which is essential for lysis of subvacuolar cytoplasm to vacuole targeted bodies and intravacuolar autophagic bodies. Involved in the lysis of intravacuolar multivesicular body (MVB) vesicles. The intravacuolar membrane disintegration by ATG15 is critical to life span extension. The chain is Putative lipase ATG15 (ATG15) from Lodderomyces elongisporus (strain ATCC 11503 / CBS 2605 / JCM 1781 / NBRC 1676 / NRRL YB-4239) (Yeast).